A 372-amino-acid chain; its full sequence is Probable inactive receptor-like protein kinase At1g65250 (372 aa).

ATP contacts are provided by residues 1 to 4 and K38; that span reads MGWL. A Protein kinase domain is found at 1-314; it reads MGWLRKKKKP…QERCQMKAFL (314 aa). Residues Y128 and Y221 each carry the phosphotyrosine modification. Positions 348–372 are disordered; sequence SSSLSSGQTQLDSAQDISSTVVLSN. The segment covering 354–372 has biased composition (polar residues); that stretch reads GQTQLDSAQDISSTVVLSN.

This sequence belongs to the protein kinase superfamily.

The protein is Probable inactive receptor-like protein kinase At1g65250 of Arabidopsis thaliana (Mouse-ear cress).